A 248-amino-acid chain; its full sequence is Probable cyclic nucleotide phosphodiesterase CBUA0032 (248 aa).

Positions 13, 15, 52, 82, 152, 191, and 193 each coordinate Fe cation. AMP-binding positions include H15, D52, and 82-83; that span reads NH. H193 is an AMP binding site.

It belongs to the cyclic nucleotide phosphodiesterase class-III family. Requires Fe(2+) as cofactor.

The protein is Probable cyclic nucleotide phosphodiesterase CBUA0032 of Coxiella burnetii (strain RSA 493 / Nine Mile phase I).